The following is a 165-amino-acid chain: 3-hydroxyacyl-[acyl-carrier-protein] dehydratase FERN, mitochondrial (165 aa).

The transit peptide at 1-35 (MLMKRLFSSSHVFSSSSASSNLLKIGSVLKQARTF) directs the protein to the mitochondrion. In terms of domain architecture, MaoC-like spans 36–124 (ADDDVLGYSK…AVSIRQIKNK (89 aa)).

As to quaternary structure, homodimer.

Its subcellular location is the mitochondrion. It catalyses the reaction a (3R)-hydroxyacyl-[ACP] = a (2E)-enoyl-[ACP] + H2O. Its pathway is lipid metabolism; fatty acid biosynthesis. Functionally, 3-hydroxyl-[acyl-carrier-protein] (3-hydroxyl-ACP) dehydratase required for mitochondrial fatty acid synthesis (mtFAS). Essential for photorespiration, tomato morphogenesis and plant development, probably by influencing mitochondrial membrane lipid composition and other lipid metabolic pathways, and by contributing to energy supply and reactive oxygen species (ROS) homeostasis. The polypeptide is 3-hydroxyacyl-[acyl-carrier-protein] dehydratase FERN, mitochondrial (Solanum lycopersicum (Tomato)).